We begin with the raw amino-acid sequence, 132 residues long: Agouti-signaling protein (132 aa).

The signal sequence occupies residues 1–22 (MDVTRLLLATLLVFLCFFTVYS). A glycan (N-linked (GlcNAc...) asparagine) is linked at N39. The interval 62-93 (ISRKEAEKKRSSKKEASMKKVAQPRTPLSAPC) is disordered. Residues 63-79 (SRKEAEKKRSSKKEASM) are compositionally biased toward basic and acidic residues. 5 cysteine pairs are disulfide-bonded: C93–C108, C100–C114, C107–C125, C111–C132, and C116–C123. Residues 93–132 (CVATRDSCKPPAPACCDPCASCQCRFFRSACSCRVLSLNC) form the Agouti domain.

The protein resides in the secreted. In terms of biological role, involved in the regulation of melanogenesis. The binding of ASP to MC1R precludes alpha-MSH initiated signaling and thus blocks production of cAMP, leading to a down-regulation of eumelanogenesis (brown/black pigment) and thus increasing synthesis of pheomelanin (yellow/red pigment). This Trachypithecus auratus (Javan langur) protein is Agouti-signaling protein (ASIP).